A 328-amino-acid polypeptide reads, in one-letter code: 4-hydroxy-3-methylbut-2-enyl diphosphate reductase (328 aa).

Position 13 (Cys-13) interacts with [4Fe-4S] cluster. (2E)-4-hydroxy-3-methylbut-2-enyl diphosphate is bound by residues His-41 and His-75. Residues His-41 and His-75 each coordinate dimethylallyl diphosphate. The isopentenyl diphosphate site is built by His-41 and His-75. Position 97 (Cys-97) interacts with [4Fe-4S] cluster. (2E)-4-hydroxy-3-methylbut-2-enyl diphosphate is bound at residue His-125. His-125 lines the dimethylallyl diphosphate pocket. Position 125 (His-125) interacts with isopentenyl diphosphate. Glu-127 serves as the catalytic Proton donor. Thr-168 provides a ligand contact to (2E)-4-hydroxy-3-methylbut-2-enyl diphosphate. Cys-225 is a [4Fe-4S] cluster binding site. The (2E)-4-hydroxy-3-methylbut-2-enyl diphosphate site is built by Ser-253, Ser-254, Asn-255, and Ser-302. The dimethylallyl diphosphate site is built by Ser-253, Ser-254, Asn-255, and Ser-302. Ser-253, Ser-254, Asn-255, and Ser-302 together coordinate isopentenyl diphosphate.

This sequence belongs to the IspH family. It depends on [4Fe-4S] cluster as a cofactor.

It carries out the reaction isopentenyl diphosphate + 2 oxidized [2Fe-2S]-[ferredoxin] + H2O = (2E)-4-hydroxy-3-methylbut-2-enyl diphosphate + 2 reduced [2Fe-2S]-[ferredoxin] + 2 H(+). It catalyses the reaction dimethylallyl diphosphate + 2 oxidized [2Fe-2S]-[ferredoxin] + H2O = (2E)-4-hydroxy-3-methylbut-2-enyl diphosphate + 2 reduced [2Fe-2S]-[ferredoxin] + 2 H(+). Its pathway is isoprenoid biosynthesis; dimethylallyl diphosphate biosynthesis; dimethylallyl diphosphate from (2E)-4-hydroxy-3-methylbutenyl diphosphate: step 1/1. It participates in isoprenoid biosynthesis; isopentenyl diphosphate biosynthesis via DXP pathway; isopentenyl diphosphate from 1-deoxy-D-xylulose 5-phosphate: step 6/6. Catalyzes the conversion of 1-hydroxy-2-methyl-2-(E)-butenyl 4-diphosphate (HMBPP) into a mixture of isopentenyl diphosphate (IPP) and dimethylallyl diphosphate (DMAPP). Acts in the terminal step of the DOXP/MEP pathway for isoprenoid precursor biosynthesis. This Chlorobium chlorochromatii (strain CaD3) protein is 4-hydroxy-3-methylbut-2-enyl diphosphate reductase.